The primary structure comprises 505 residues: Elsinochrome transporter 1 (505 aa).

The segment covering 1–10 (MALSGLGSGP) has biased composition (gly residues). A disordered region spans residues 1-25 (MALSGLGSGPEGNPNNHQGKAIPTL). Residues 35–55 (FLFSWVSFLVPFWSWYPFSPL) traverse the membrane as a helical segment. Residues Asn64 and Asn80 are each glycosylated (N-linked (GlcNAc...) asparagine). Residues 221–295 (DTPTGAGKPP…TEKGESLPLT (75 aa)) are disordered. Residues 255 to 267 (TPSSPDRSSSTNS) show a composition bias toward low complexity. Transmembrane regions (helical) follow at residues 313 to 333 (VIFS…FGAE), 348 to 368 (LGLG…LNIV), 391 to 411 (KALL…IGLA), 417 to 437 (ATLV…ANGL), 449 to 469 (VVSG…AIVF), and 479 to 499 (VFWI…WIKP).

The protein belongs to the major facilitator superfamily. Nitrate/nitrite porter (TC 2.A.1.8) family.

It is found in the cell membrane. Major facilitator-type transporter; part of the gene cluster that mediates the biosynthesis of elsinochromes, pigments consisting of at least four interconvertible tautomers (A, B, C and D) that have a core phenolic quinone to which various side chains are attached and which play an important role in fungal pathogenesis. Once elsinochrome is synthesized, it must be exported outside the fungal cells, which is probably accomplished by the ECT1 transporter, to avoid toxicity. This chain is Elsinochrome transporter 1, found in Elsinoe fawcettii (Citrus scab fungus).